The chain runs to 129 residues: uncharacterized protein (129 aa).

Residues 1-129 (MWLWQDIQCC…HTSNGRTGDL (129 aa)) are disordered. The span at 87 to 100 (KGADTRRLPRETRP) shows a compositional bias: basic and acidic residues. Over residues 119 to 129 (PHTSNGRTGDL) the composition is skewed to polar residues.

This is an uncharacterized protein from Homo sapiens (Human).